A 232-amino-acid chain; its full sequence is Octanoyltransferase (232 aa).

The BPL/LPL catalytic domain maps to 32–219 (NIIYDTLILL…SFKVFNFSSY (188 aa)). Residues 77–84 (RGGDITYH), 140–142 (AIG), and 153–155 (GFA) each bind substrate. Catalysis depends on cysteine 171, which acts as the Acyl-thioester intermediate.

It belongs to the LipB family.

It is found in the cytoplasm. The catalysed reaction is octanoyl-[ACP] + L-lysyl-[protein] = N(6)-octanoyl-L-lysyl-[protein] + holo-[ACP] + H(+). It functions in the pathway protein modification; protein lipoylation via endogenous pathway; protein N(6)-(lipoyl)lysine from octanoyl-[acyl-carrier-protein]: step 1/2. Its function is as follows. Catalyzes the transfer of endogenously produced octanoic acid from octanoyl-acyl-carrier-protein onto the lipoyl domains of lipoate-dependent enzymes. Lipoyl-ACP can also act as a substrate although octanoyl-ACP is likely to be the physiological substrate. The sequence is that of Octanoyltransferase from Dictyoglomus turgidum (strain DSM 6724 / Z-1310).